Reading from the N-terminus, the 75-residue chain is Psi-conotoxin PIIIE (75 aa).

The signal sequence occupies residues 1–19 (MSKLGALLTICLLLFPITA). The propeptide occupies 20–50 (LLMDGDQPADRPAERMDYDISSEVHRLLERR). Residues P52, P53, and P64 each carry the 4-hydroxyproline modification. 3 disulfides stabilise this stretch: C54-C66, C55-C71, and C60-C72. The residue at position 74 (G74) is a Glycine amide.

Expressed by the venom duct.

It is found in the secreted. In terms of biological role, psi-conotoxins act on postsynaptic membranes, and act as non-competitive antagonist of nicotinic acetylcholine receptors (nAChR). Is more toxic than Psi-conotoxin PIIIF. In vivo, has paralytic activity when injected intraperitoneally into goldfish. In Conus purpurascens (Purple cone), this protein is Psi-conotoxin PIIIE.